Here is a 370-residue protein sequence, read N- to C-terminus: Cell division protein DivIB (370 aa).

Residues 1 to 65 form a disordered region; it reads MKKKKDEELT…SNKKGTKRIV (65 aa). Residues 1–74 are Cytoplasmic-facing; the sequence is MKKKKDEELT…VKEQRLSRQK (74 aa). Basic residues-rich tracts occupy residues 25 to 34 and 47 to 63; these read SRFKRKRKAT and RNNR…GTKR. The helical transmembrane segment at 75-95 threads the bilayer; the sequence is LGILIGSTLIVIALFFGYFYS. Residues 96–370 lie on the Extracellular side of the membrane; that stretch reads SISRVQKFSV…STVNTQQDID (275 aa). A POTRA domain is found at 98 to 169; the sequence is SRVQKFSVSG…GKVKIKVKEN (72 aa). A disordered region spans residues 295–370; it reads SGWTDEAKAA…STVNTQQDID (76 aa). Low complexity-rich tracts occupy residues 304-314 and 327-342; these read ASESSKSAESS and SESA…STET. The span at 356–370 shows a compositional bias: polar residues; that stretch reads SSNAESTVNTQQDID.

Belongs to the FtsQ/DivIB family. DivIB subfamily.

The protein localises to the cell membrane. Functionally, cell division protein that may be involved in stabilizing or promoting the assembly of the division complex. This chain is Cell division protein DivIB, found in Pediococcus pentosaceus (strain ATCC 25745 / CCUG 21536 / LMG 10740 / 183-1w).